We begin with the raw amino-acid sequence, 289 residues long: Homoserine kinase (289 aa).

An ATP-binding site is contributed by 79-89 (PLARGLGSSSS).

It belongs to the GHMP kinase family. Homoserine kinase subfamily.

It is found in the cytoplasm. It carries out the reaction L-homoserine + ATP = O-phospho-L-homoserine + ADP + H(+). It participates in amino-acid biosynthesis; L-threonine biosynthesis; L-threonine from L-aspartate: step 4/5. Its function is as follows. Catalyzes the ATP-dependent phosphorylation of L-homoserine to L-homoserine phosphate. In Streptococcus pneumoniae serotype 2 (strain D39 / NCTC 7466), this protein is Homoserine kinase.